We begin with the raw amino-acid sequence, 325 residues long: Phosphate acyltransferase (325 aa).

This sequence belongs to the PlsX family. As to quaternary structure, homodimer. Probably interacts with PlsY.

It is found in the cytoplasm. The enzyme catalyses a fatty acyl-[ACP] + phosphate = an acyl phosphate + holo-[ACP]. It participates in lipid metabolism; phospholipid metabolism. In terms of biological role, catalyzes the reversible formation of acyl-phosphate (acyl-PO(4)) from acyl-[acyl-carrier-protein] (acyl-ACP). This enzyme utilizes acyl-ACP as fatty acyl donor, but not acyl-CoA. In Staphylococcus epidermidis (strain ATCC 12228 / FDA PCI 1200), this protein is Phosphate acyltransferase.